We begin with the raw amino-acid sequence, 505 residues long: Ribose import ATP-binding protein RbsA 2 (505 aa).

ABC transporter domains are found at residues 13-249 (LALE…VGRD) and 259-503 (VRAG…TGRA). 45–52 (GENGAGKS) contacts ATP.

This sequence belongs to the ABC transporter superfamily. Ribose importer (TC 3.A.1.2.1) family. As to quaternary structure, the complex is composed of an ATP-binding protein (RbsA), two transmembrane proteins (RbsC) and a solute-binding protein (RbsB).

It is found in the cell membrane. The enzyme catalyses D-ribose(out) + ATP + H2O = D-ribose(in) + ADP + phosphate + H(+). Part of the ABC transporter complex RbsABC involved in ribose import. Responsible for energy coupling to the transport system. The protein is Ribose import ATP-binding protein RbsA 2 of Streptomyces avermitilis (strain ATCC 31267 / DSM 46492 / JCM 5070 / NBRC 14893 / NCIMB 12804 / NRRL 8165 / MA-4680).